Here is a 217-residue protein sequence, read N- to C-terminus: Uridylate kinase (217 aa).

Position 6–10 (6–10 (KLSGR)) interacts with ATP. Position 38 (Gly-38) interacts with UMP. Positions 39 and 43 each coordinate ATP. UMP is bound by residues Asp-60 and 107-113 (FQPGQST). ATP contacts are provided by Asn-134, Tyr-139, and Asp-142.

It belongs to the UMP kinase family. In terms of assembly, homohexamer.

It is found in the cytoplasm. The catalysed reaction is UMP + ATP = UDP + ADP. The protein operates within pyrimidine metabolism; CTP biosynthesis via de novo pathway; UDP from UMP (UMPK route): step 1/1. Its activity is regulated as follows. Inhibited by UTP. Catalyzes the reversible phosphorylation of UMP to UDP. In Pyrobaculum neutrophilum (strain DSM 2338 / JCM 9278 / NBRC 100436 / V24Sta) (Thermoproteus neutrophilus), this protein is Uridylate kinase.